A 309-amino-acid polypeptide reads, in one-letter code: MTKMRESEIIRMFIEEFDNHALGDDAGFVRFNDSWLLVTSDMLVWRTDVPDFMTPEEAGKKVVTMNVSDIAAMGGLPLAFFFSLGVPENTDEKTLRGIAKGINKGAKEYGVKIVSGDTNEAREIIIDGGAIGRGSRLLLRSNAKPGDLVCVTGELGRPLTALLLWLKGEEIPPKILEKAKNPKAREREGIELSNYANSAIDISDGLSKELWEIARSSNVRIVIDEDKIPVNEEVREIVKDPIKIALASGEEFELVFTIPKENLGNISFDFTIIGRVEEGEGVYIKREDKMERLPILGWEHLKGGDYVNL.

Mg(2+) contacts are provided by aspartate 25, threonine 39, serine 40, and aspartate 41. Substrate is bound at residue aspartate 48. The Mg(2+) site is built by aspartate 69 and aspartate 117. Residues 116-117 and arginine 140 each bind ATP; that span reads GD. Aspartate 201 serves as a coordination point for Mg(2+). Serine 203 contributes to the ATP binding site. Aspartate 204 serves as a coordination point for Mg(2+). Glutamate 250 and tryptophan 298 together coordinate substrate.

This sequence belongs to the thiamine-monophosphate kinase family.

The catalysed reaction is thiamine phosphate + ATP = thiamine diphosphate + ADP. The protein operates within cofactor biosynthesis; thiamine diphosphate biosynthesis; thiamine diphosphate from thiamine phosphate: step 1/1. Functionally, catalyzes the ATP-dependent phosphorylation of thiamine-monophosphate (TMP) to form thiamine-pyrophosphate (TPP), the active form of vitamin B1. The sequence is that of Thiamine-monophosphate kinase from Pyrococcus horikoshii (strain ATCC 700860 / DSM 12428 / JCM 9974 / NBRC 100139 / OT-3).